The sequence spans 307 residues: Ornithine carbamoyltransferase (307 aa).

Residues 55-58 (STRT), Gln82, Arg106, and 133-136 (HPCQ) contribute to the carbamoyl phosphate site. L-ornithine contacts are provided by residues Asn164, Asp224, and 228 to 229 (SM). Residues 263–264 (CL) and Arg291 contribute to the carbamoyl phosphate site.

The protein belongs to the aspartate/ornithine carbamoyltransferase superfamily. OTCase family.

Its subcellular location is the cytoplasm. It catalyses the reaction carbamoyl phosphate + L-ornithine = L-citrulline + phosphate + H(+). The protein operates within amino-acid biosynthesis; L-arginine biosynthesis; L-arginine from L-ornithine and carbamoyl phosphate: step 1/3. Functionally, reversibly catalyzes the transfer of the carbamoyl group from carbamoyl phosphate (CP) to the N(epsilon) atom of ornithine (ORN) to produce L-citrulline. This is Ornithine carbamoyltransferase from Bradyrhizobium diazoefficiens (strain JCM 10833 / BCRC 13528 / IAM 13628 / NBRC 14792 / USDA 110).